A 138-amino-acid chain; its full sequence is Small ribosomal subunit protein uS11c (138 aa).

A disordered region spans residues 1–22 (MAKAIPKISSRRNGRIGSRKGA). The segment covering 9 to 22 (SSRRNGRIGSRKGA) has biased composition (basic residues).

The protein belongs to the universal ribosomal protein uS11 family. As to quaternary structure, part of the 30S ribosomal subunit.

It is found in the plastid. The protein localises to the chloroplast. The sequence is that of Small ribosomal subunit protein uS11c from Nicotiana tomentosiformis (Tobacco).